We begin with the raw amino-acid sequence, 347 residues long: F-box/LRR-repeat/kelch-repeat protein At2g27520 (347 aa).

Positions 1 to 50 (MVRLDLPWDLVDEILSRLPATSLGRLRFTCKRWNALFKDPEFITKQFHKA) constitute an F-box domain. LRR repeat units follow at residues 59 to 82 (LSNF…EIAQ), 152 to 177 (CKLV…NVEK), 196 to 220 (KFNI…LYQD), and 261 to 285 (LSWS…ILRI). The stretch at 138 to 187 (KSYDSYKILRITYGCKLVEIFELKSNSWRVLSKVHPNVEKHYYGGVSFKG) is one Kelch 1 repeat. Residues 306–347 (MIYIVGKNGFKKLSYEKDRSNLWRLPFFFSYVPSLVGLYPPM) form a Kelch 2 repeat.

The sequence is that of F-box/LRR-repeat/kelch-repeat protein At2g27520 from Arabidopsis thaliana (Mouse-ear cress).